The sequence spans 128 residues: Small ribosomal subunit protein uS11 (128 aa).

Belongs to the universal ribosomal protein uS11 family. Part of the 30S ribosomal subunit. Interacts with proteins S7 and S18. Binds to IF-3.

Located on the platform of the 30S subunit, it bridges several disparate RNA helices of the 16S rRNA. Forms part of the Shine-Dalgarno cleft in the 70S ribosome. The chain is Small ribosomal subunit protein uS11 from Wolbachia pipientis wMel.